A 629-amino-acid polypeptide reads, in one-letter code: tRNA uridine 5-carboxymethylaminomethyl modification enzyme MnmG (629 aa).

FAD contacts are provided by residues 13-18, Val-125, and Ser-180; that span reads GGGHAG. 273–287 provides a ligand contact to NAD(+); the sequence is GPRYCPSIEDKVMRF. Gln-370 lines the FAD pocket.

It belongs to the MnmG family. Homodimer. Heterotetramer of two MnmE and two MnmG subunits. FAD is required as a cofactor.

Its subcellular location is the cytoplasm. Its function is as follows. NAD-binding protein involved in the addition of a carboxymethylaminomethyl (cmnm) group at the wobble position (U34) of certain tRNAs, forming tRNA-cmnm(5)s(2)U34. This chain is tRNA uridine 5-carboxymethylaminomethyl modification enzyme MnmG, found in Salmonella arizonae (strain ATCC BAA-731 / CDC346-86 / RSK2980).